We begin with the raw amino-acid sequence, 492 residues long: NAD(P)H-quinone oxidoreductase subunit 2 A, chloroplastic (492 aa).

13 consecutive transmembrane segments (helical) span residues 6 to 26, 39 to 59, 81 to 101, 106 to 126, 131 to 151, 165 to 185, 209 to 229, 277 to 297, 305 to 325, 329 to 349, 377 to 397, 400 to 420, and 466 to 486; these read LLLFHGSFIFPECILIFGLIL, TPWLYFISSTSLVMSITALLF, VFQFLILLCSTLCIPLSVEYI, MAITEFLLFVLTATLGGMFLC, LITIFVAPECFSLCSYLLSGY, YLLMGGASSSILVHGFSWLYG, PGISIALISITVGIGFKLSPA, WHLLLEILAILSMILGNLIAI, MLAYSSIGQIGYVIIGIIVGD, GYASMITYMLFYISMNLGTFA, ALSSALCLLSLGGIPPLAGFF, LHLFWCGWQAGLYFLVSIGLL, and MIVCVIASTIPGISMNPIIAI.

It belongs to the complex I subunit 2 family. As to quaternary structure, NDH is composed of at least 16 different subunits, 5 of which are encoded in the nucleus.

It localises to the plastid. The protein resides in the chloroplast thylakoid membrane. The enzyme catalyses a plastoquinone + NADH + (n+1) H(+)(in) = a plastoquinol + NAD(+) + n H(+)(out). It carries out the reaction a plastoquinone + NADPH + (n+1) H(+)(in) = a plastoquinol + NADP(+) + n H(+)(out). Functionally, NDH shuttles electrons from NAD(P)H:plastoquinone, via FMN and iron-sulfur (Fe-S) centers, to quinones in the photosynthetic chain and possibly in a chloroplast respiratory chain. The immediate electron acceptor for the enzyme in this species is believed to be plastoquinone. Couples the redox reaction to proton translocation, and thus conserves the redox energy in a proton gradient. The protein is NAD(P)H-quinone oxidoreductase subunit 2 A, chloroplastic of Illicium oligandrum (Star anise).